The primary structure comprises 257 residues: S-methyl-5'-thioadenosine phosphorylase (257 aa).

Residues Ser-10, Arg-50–His-51, and Thr-83–Ala-84 each bind phosphate. Met-180 provides a ligand contact to substrate. A phosphate-binding site is contributed by Thr-181. Asp-204–Asp-206 is a substrate binding site.

Belongs to the PNP/MTAP phosphorylase family. MTAP subfamily. Homohexamer. Dimer of a homotrimer.

It catalyses the reaction S-methyl-5'-thioadenosine + phosphate = 5-(methylsulfanyl)-alpha-D-ribose 1-phosphate + adenine. The catalysed reaction is adenosine + phosphate = alpha-D-ribose 1-phosphate + adenine. It functions in the pathway amino-acid biosynthesis; L-methionine biosynthesis via salvage pathway; S-methyl-5-thio-alpha-D-ribose 1-phosphate from S-methyl-5'-thioadenosine (phosphorylase route): step 1/1. In terms of biological role, catalyzes the reversible phosphorylation of S-methyl-5'-thioadenosine (MTA) to adenine and 5-methylthioribose-1-phosphate. Involved in the breakdown of MTA, a major by-product of polyamine biosynthesis. Responsible for the first step in the methionine salvage pathway after MTA has been generated from S-adenosylmethionine. Has broad substrate specificity with 6-aminopurine nucleosides as preferred substrates. Can also use adenosine as substrate to form ribose 1-phosphate. This Thermococcus kodakarensis (strain ATCC BAA-918 / JCM 12380 / KOD1) (Pyrococcus kodakaraensis (strain KOD1)) protein is S-methyl-5'-thioadenosine phosphorylase.